The chain runs to 860 residues: DNA mismatch repair protein MutS (860 aa).

618–625 (GPNMGGKS) serves as a coordination point for ATP.

The protein belongs to the DNA mismatch repair MutS family.

Functionally, this protein is involved in the repair of mismatches in DNA. It is possible that it carries out the mismatch recognition step. This protein has a weak ATPase activity. This Hahella chejuensis (strain KCTC 2396) protein is DNA mismatch repair protein MutS.